We begin with the raw amino-acid sequence, 173 residues long: uncharacterized protein (173 aa).

This is an uncharacterized protein from Bacillus subtilis (strain 168).